A 280-amino-acid polypeptide reads, in one-letter code: Transcription factor HES-1 (280 aa).

The disordered stretch occupies residues 1–44 (MPADIMEKNSSSPVAATPASVNTTPDKPKTASEHRKSSKPIMEK). Positions 10–21 (SSSPVAATPASV) are enriched in low complexity. Residues 26–35 (DKPKTASEHR) show a composition bias toward basic and acidic residues. Residues 34–91 (HRKSSKPIMEKRRRARINESLSQLKTLILDALKKDSSRHSKLEKADILEMTVKHLRNL) enclose the bHLH domain. The Orange domain occupies 110–143 (YRAGFSECMNEVTRFLSTCEGVNTEVRTRLLGHL). Disordered regions lie at residues 157–200 (GQPH…PPGG) and 254–280 (TSVG…PWRN). Composition is skewed to pro residues over residues 164-174 (QAPPPPPPGPG) and 181-200 (FAPP…PPGG). Positions 254–271 (TSVGPNAVSPSSGPSLTA) are enriched in polar residues. Positions 275 to 278 (WRPW) match the WRPW motif motif.

As to quaternary structure, transcription repression requires formation of a complex with a corepressor protein of the Groucho/TLE family. Interacts with SIRT1. Interacts (via WPRW motif) with TLE1, and more weakly with TLE2. Interacts with HES6. Interacts with an FA complex, composed of FANCA, FANCF, FANCG and FANCL, but not of FANCC, nor FANCE.

It localises to the nucleus. Its function is as follows. Transcriptional repressor of genes that require a bHLH protein for their transcription. May act as a negative regulator of myogenesis by inhibiting the functions of MYOD1 and ASH1. Binds DNA on N-box motifs: 5'-CACNAG-3' with high affinity and on E-box motifs: 5'-CANNTG-3' with low affinity. May play a role in a functional FA core complex response to DNA cross-link damage, being required for the stability and nuclear localization of FA core complex proteins, as well as for FANCD2 monoubiquitination in response to DNA damage. This is Transcription factor HES-1 (HES1) from Bos taurus (Bovine).